The following is a 92-amino-acid chain: DNA-directed RNA polymerase subunit Rpo11 (92 aa).

Belongs to the archaeal Rpo11/eukaryotic RPB11/RPC19 RNA polymerase subunit family. As to quaternary structure, part of the RNA polymerase complex.

It localises to the cytoplasm. It carries out the reaction RNA(n) + a ribonucleoside 5'-triphosphate = RNA(n+1) + diphosphate. Its function is as follows. DNA-dependent RNA polymerase (RNAP) catalyzes the transcription of DNA into RNA using the four ribonucleoside triphosphates as substrates. In Pyrobaculum aerophilum (strain ATCC 51768 / DSM 7523 / JCM 9630 / CIP 104966 / NBRC 100827 / IM2), this protein is DNA-directed RNA polymerase subunit Rpo11.